Here is a 442-residue protein sequence, read N- to C-terminus: F-box protein KIB2 (442 aa).

In terms of domain architecture, F-box spans 62–109 (SKQPVLVLDLLRSILERLSFVDFHRGRCISLEWYSASESCLAVKNPTS). The Nuclear localization signal motif lies at 236–243 (HKKGDENY).

In terms of assembly, interacts with ASK7/BIN2/SK21.

The protein localises to the cytoplasm. It localises to the nucleus. It is found in the nucleolus. Its function is as follows. Component of SCF(ASK-cullin-F-box) E3 ubiquitin ligase complexes, which may mediate the ubiquitination and subsequent proteasomal degradation of target proteins. Required for brassinosteroid (BR) signal transduction. Mediates ASK7/BIN2/SK21 inactivation both by competing with substrate binding (e.g. BZR1) and by promoting its ubiquitination and subsequent proteasomal degradation. The polypeptide is F-box protein KIB2 (Arabidopsis thaliana (Mouse-ear cress)).